Here is a 1805-residue protein sequence, read N- to C-terminus: Cytadherence high molecular weight protein 2 (1805 aa).

Coiled-coil stretches lie at residues E28 to F838, E914 to Q1591, D1632 to T1723, and N1777 to S1804.

Component of the cytoskeleton-like structure which stabilizes the shape of the wall-less Mycoplasma. This cytoskeleton-like network of accessory proteins containing HMW proteins 1 to 5 allows the proper anchoring of cytadhesin proteins in the mycoplasmal membrane at the attachment organelle. The sequence is that of Cytadherence high molecular weight protein 2 (hmw2) from Mycoplasma genitalium (strain ATCC 33530 / DSM 19775 / NCTC 10195 / G37) (Mycoplasmoides genitalium).